We begin with the raw amino-acid sequence, 499 residues long: UDP-N-acetylmuramoyl-L-alanyl-D-glutamate--2,6-diaminopimelate ligase (499 aa).

Serine 32 contributes to the UDP-N-acetyl-alpha-D-muramoyl-L-alanyl-D-glutamate binding site. Residue 117–123 coordinates ATP; the sequence is GTNGKTT. Residues 159–160, serine 186, glutamine 192, and arginine 194 each bind UDP-N-acetyl-alpha-D-muramoyl-L-alanyl-D-glutamate; that span reads TT. Lysine 226 carries the N6-carboxylysine modification. Meso-2,6-diaminopimelate is bound by residues arginine 394, 418–421, glycine 469, and glutamate 473; that span reads DNPR. The short motif at 418–421 is the Meso-diaminopimelate recognition motif element; sequence DNPR.

This sequence belongs to the MurCDEF family. MurE subfamily. It depends on Mg(2+) as a cofactor. Carboxylation is probably crucial for Mg(2+) binding and, consequently, for the gamma-phosphate positioning of ATP.

The protein localises to the cytoplasm. The enzyme catalyses UDP-N-acetyl-alpha-D-muramoyl-L-alanyl-D-glutamate + meso-2,6-diaminopimelate + ATP = UDP-N-acetyl-alpha-D-muramoyl-L-alanyl-gamma-D-glutamyl-meso-2,6-diaminopimelate + ADP + phosphate + H(+). The protein operates within cell wall biogenesis; peptidoglycan biosynthesis. Catalyzes the addition of meso-diaminopimelic acid to the nucleotide precursor UDP-N-acetylmuramoyl-L-alanyl-D-glutamate (UMAG) in the biosynthesis of bacterial cell-wall peptidoglycan. The protein is UDP-N-acetylmuramoyl-L-alanyl-D-glutamate--2,6-diaminopimelate ligase of Synechococcus sp. (strain WH7803).